We begin with the raw amino-acid sequence, 231 residues long: NADH-ubiquinone oxidoreductase chain 4 (231 aa).

The next 6 membrane-spanning stretches (helical) occupy residues 1–21 (PIAG…YGII), 34–54 (LFLP…LTCL), 61–80 (SLIA…AIII), 84–106 (WGLS…LFCL), 128–148 (ILPM…ATPP), and 169–189 (TIIL…HMFL).

It belongs to the complex I subunit 4 family.

Its subcellular location is the mitochondrion membrane. It carries out the reaction a ubiquinone + NADH + 5 H(+)(in) = a ubiquinol + NAD(+) + 4 H(+)(out). Core subunit of the mitochondrial membrane respiratory chain NADH dehydrogenase (Complex I) that is believed to belong to the minimal assembly required for catalysis. Complex I functions in the transfer of electrons from NADH to the respiratory chain. The immediate electron acceptor for the enzyme is believed to be ubiquinone. This chain is NADH-ubiquinone oxidoreductase chain 4 (MT-ND4), found in Metlapilcoatlus nummifer (Mexican jumping pitviper).